Reading from the N-terminus, the 188-residue chain is Acireductone dioxygenase (188 aa).

Fe(2+) contacts are provided by His-97, His-99, Glu-103, and His-141. Residues His-97, His-99, Glu-103, and His-141 each contribute to the Ni(2+) site.

Belongs to the acireductone dioxygenase (ARD) family. In terms of assembly, monomer. The cofactor is Fe(2+). Ni(2+) is required as a cofactor.

It catalyses the reaction 1,2-dihydroxy-5-(methylsulfanyl)pent-1-en-3-one + O2 = 3-(methylsulfanyl)propanoate + CO + formate + 2 H(+). The catalysed reaction is 1,2-dihydroxy-5-(methylsulfanyl)pent-1-en-3-one + O2 = 4-methylsulfanyl-2-oxobutanoate + formate + 2 H(+). The protein operates within amino-acid biosynthesis; L-methionine biosynthesis via salvage pathway; L-methionine from S-methyl-5-thio-alpha-D-ribose 1-phosphate: step 5/6. Functionally, catalyzes 2 different reactions between oxygen and the acireductone 1,2-dihydroxy-3-keto-5-methylthiopentene (DHK-MTPene) depending upon the metal bound in the active site. Fe-containing acireductone dioxygenase (Fe-ARD) produces formate and 2-keto-4-methylthiobutyrate (KMTB), the alpha-ketoacid precursor of methionine in the methionine recycle pathway. Ni-containing acireductone dioxygenase (Ni-ARD) produces methylthiopropionate, carbon monoxide and formate, and does not lie on the methionine recycle pathway. This chain is Acireductone dioxygenase, found in Xylella fastidiosa (strain 9a5c).